Here is a 1707-residue protein sequence, read N- to C-terminus: Kinesin-like protein KIF1A (1707 aa).

One can recognise a Kinesin motor domain in the interval 5–354 (SVKVAVRVRP…LRYADRAKQI (350 aa)). The ATP site is built by glycine 102, lysine 103, serine 104, tyrosine 105, and serine 215. A Mg(2+)-binding site is contributed by serine 104. Residues 439–466 (SEEAIERLKETEKIIAELNETWEEKLRR) adopt a coiled-coil conformation. An FHA domain is found at 525-581 (TRVGREDAERRQDIVLSGHFIKEEHCIFRSDSRGGGEAVVTLEPCEGADTYVNGKKV). Coiled coils occupy residues 637-671 (EKQG…LLEQ) and 811-831 (LEKL…AAEV). The segment at 657–1105 (QYRREREEAT…LCKDVLSPLR (449 aa)) is required for interaction with CALM1, PPFIA2 and TANC2. Disordered stretches follow at residues 1424-1462 (PVPE…EVPN) and 1536-1576 (TDVR…EKEP). The span at 1429–1453 (LSPASSEDSESRSSSGASSPLSAEG) shows a compositional bias: low complexity. The PH domain maps to 1592-1690 (IVSKKGYLHF…WLYAFNPLLA (99 aa)).

It belongs to the TRAFAC class myosin-kinesin ATPase superfamily. Kinesin family. Unc-104 subfamily. Dimeric motor; dimerization is required for ATP-driven processive motility. Monomer in vitro. Interacts with PPFIA1 and PPFIA4. Interacts with CALM1; the interaction is increased in presence of calcium and increases neuronal dense core vesicles motility. Interacts with PPFIA2 and TANC2; both interactions allow the recruitment of neuronal dense core vesicles to dendritic spines and decrease in presence of calcium. Interacts with SYT4 (unphosphorylated) and SYT11; both interactions increase in presence of calcium. Interacts with MADD.

It is found in the cytoplasm. The protein localises to the cytoskeleton. It localises to the cell projection. Its subcellular location is the neuron projection. The protein resides in the axon. It is found in the perinuclear region. The protein localises to the synapse. It localises to the cytoplasmic vesicle. Its subcellular location is the secretory vesicle. The protein resides in the neuronal dense core vesicle membrane. It catalyses the reaction ATP + H2O + a kinesin associated with a microtubule at position (n) = ADP + phosphate a kinesin associated with a microtubule at position (n+1, toward the plus end).. Its function is as follows. Kinesin motor with a plus-end-directed microtubule motor activity, involved in anterograde axonal transport of synaptic vesicle precursors. Also required for neuronal dense core vesicles (DCVs) transport to the dendritic spines and axons. The interaction calcium-dependent with CALM1 increases vesicle motility and interaction with the scaffolding proteins PPFIA2 and TANC2 recruits DCVs to synaptic sites. This chain is Kinesin-like protein KIF1A, found in Rattus norvegicus (Rat).